Here is a 216-residue protein sequence, read N- to C-terminus: GTP cyclohydrolase-2 (216 aa).

51 to 55 (RIHSE) is a binding site for GTP. The Zn(2+) site is built by C56, C67, and C69. Residues Q72, 94–96 (EGR), and T116 each bind GTP. Residue D128 is the Proton acceptor of the active site. R130 functions as the Nucleophile in the catalytic mechanism. 2 residues coordinate GTP: T151 and K156.

Belongs to the GTP cyclohydrolase II family. Zn(2+) serves as cofactor.

It carries out the reaction GTP + 4 H2O = 2,5-diamino-6-hydroxy-4-(5-phosphoribosylamino)-pyrimidine + formate + 2 phosphate + 3 H(+). Its pathway is cofactor biosynthesis; riboflavin biosynthesis; 5-amino-6-(D-ribitylamino)uracil from GTP: step 1/4. In terms of biological role, catalyzes the conversion of GTP to 2,5-diamino-6-ribosylamino-4(3H)-pyrimidinone 5'-phosphate (DARP), formate and pyrophosphate. This chain is GTP cyclohydrolase-2, found in Haemophilus influenzae (strain PittEE).